Here is a 233-residue protein sequence, read N- to C-terminus: Small ribosomal subunit protein uS3 (233 aa).

Positions 39-107 (VRKYLTKELE…PAQINIAEVR (69 aa)) constitute a KH type-2 domain.

Belongs to the universal ribosomal protein uS3 family. Part of the 30S ribosomal subunit. Forms a tight complex with proteins S10 and S14.

Functionally, binds the lower part of the 30S subunit head. Binds mRNA in the 70S ribosome, positioning it for translation. This chain is Small ribosomal subunit protein uS3, found in Pectobacterium carotovorum subsp. carotovorum (strain PC1).